The sequence spans 142 residues: Small ribosomal subunit protein uS9 (142 aa).

It belongs to the universal ribosomal protein uS9 family.

Its subcellular location is the cytoplasm. The polypeptide is Small ribosomal subunit protein uS9 (RPS16) (Syntrichia ruralis (Great hairy screw-moss)).